Reading from the N-terminus, the 106-residue chain is uncharacterized protein (106 aa).

It is found in the mitochondrion. This is an uncharacterized protein from Arabidopsis thaliana (Mouse-ear cress).